Here is a 144-residue protein sequence, read N- to C-terminus: D-aminoacyl-tRNA deacylase (144 aa).

The short motif at 136-137 (GP) is the Gly-cisPro motif, important for rejection of L-amino acids element.

This sequence belongs to the DTD family. Homodimer.

It localises to the cytoplasm. The catalysed reaction is glycyl-tRNA(Ala) + H2O = tRNA(Ala) + glycine + H(+). It catalyses the reaction a D-aminoacyl-tRNA + H2O = a tRNA + a D-alpha-amino acid + H(+). In terms of biological role, an aminoacyl-tRNA editing enzyme that deacylates mischarged D-aminoacyl-tRNAs. Also deacylates mischarged glycyl-tRNA(Ala), protecting cells against glycine mischarging by AlaRS. Acts via tRNA-based rather than protein-based catalysis; rejects L-amino acids rather than detecting D-amino acids in the active site. By recycling D-aminoacyl-tRNA to D-amino acids and free tRNA molecules, this enzyme counteracts the toxicity associated with the formation of D-aminoacyl-tRNA entities in vivo and helps enforce protein L-homochirality. This Haemophilus ducreyi (strain 35000HP / ATCC 700724) protein is D-aminoacyl-tRNA deacylase.